Reading from the N-terminus, the 62-residue chain is Large ribosomal subunit protein bL28 (62 aa).

Belongs to the bacterial ribosomal protein bL28 family.

The protein is Large ribosomal subunit protein bL28 of Aster yellows witches'-broom phytoplasma (strain AYWB).